A 445-amino-acid chain; its full sequence is Glucose-6-phosphate isomerase (445 aa).

E287 acts as the Proton donor in catalysis. Active-site residues include H308 and K422.

Belongs to the GPI family.

Its subcellular location is the cytoplasm. The catalysed reaction is alpha-D-glucose 6-phosphate = beta-D-fructose 6-phosphate. It functions in the pathway carbohydrate biosynthesis; gluconeogenesis. It participates in carbohydrate degradation; glycolysis; D-glyceraldehyde 3-phosphate and glycerone phosphate from D-glucose: step 2/4. Its function is as follows. Catalyzes the reversible isomerization of glucose-6-phosphate to fructose-6-phosphate. The chain is Glucose-6-phosphate isomerase from Bacteroides fragilis (strain ATCC 25285 / DSM 2151 / CCUG 4856 / JCM 11019 / LMG 10263 / NCTC 9343 / Onslow / VPI 2553 / EN-2).